We begin with the raw amino-acid sequence, 315 residues long: Ribosomal RNA small subunit methyltransferase H (315 aa).

S-adenosyl-L-methionine contacts are provided by residues G37–H39, D57, F83, D105, and Q112.

Belongs to the methyltransferase superfamily. RsmH family.

It localises to the cytoplasm. It catalyses the reaction cytidine(1402) in 16S rRNA + S-adenosyl-L-methionine = N(4)-methylcytidine(1402) in 16S rRNA + S-adenosyl-L-homocysteine + H(+). Its function is as follows. Specifically methylates the N4 position of cytidine in position 1402 (C1402) of 16S rRNA. The polypeptide is Ribosomal RNA small subunit methyltransferase H (Pseudomonas putida (strain ATCC 47054 / DSM 6125 / CFBP 8728 / NCIMB 11950 / KT2440)).